Here is a 601-residue protein sequence, read N- to C-terminus: Elongation factor 4 (601 aa).

Residues 7–189 (DRIRNFSIIA…ALVTRLPAPK (183 aa)) form the tr-type G domain. GTP-binding positions include 19–24 (DHGKST) and 136–139 (NKVD).

Belongs to the TRAFAC class translation factor GTPase superfamily. Classic translation factor GTPase family. LepA subfamily.

Its subcellular location is the cell inner membrane. It carries out the reaction GTP + H2O = GDP + phosphate + H(+). Required for accurate and efficient protein synthesis under certain stress conditions. May act as a fidelity factor of the translation reaction, by catalyzing a one-codon backward translocation of tRNAs on improperly translocated ribosomes. Back-translocation proceeds from a post-translocation (POST) complex to a pre-translocation (PRE) complex, thus giving elongation factor G a second chance to translocate the tRNAs correctly. Binds to ribosomes in a GTP-dependent manner. The polypeptide is Elongation factor 4 (Granulibacter bethesdensis (strain ATCC BAA-1260 / CGDNIH1)).